The following is a 203-amino-acid chain: LexA repressor (203 aa).

A DNA-binding region (H-T-H motif) is located at residues Val-29–Lys-49. Active-site for autocatalytic cleavage activity residues include Ser-126 and Lys-163.

Belongs to the peptidase S24 family. Homodimer.

The catalysed reaction is Hydrolysis of Ala-|-Gly bond in repressor LexA.. Represses a number of genes involved in the response to DNA damage (SOS response), including recA and lexA. In the presence of single-stranded DNA, RecA interacts with LexA causing an autocatalytic cleavage which disrupts the DNA-binding part of LexA, leading to derepression of the SOS regulon and eventually DNA repair. In Pelotomaculum thermopropionicum (strain DSM 13744 / JCM 10971 / SI), this protein is LexA repressor.